Consider the following 169-residue polypeptide: Large ribosomal subunit protein uL10 (169 aa).

This sequence belongs to the universal ribosomal protein uL10 family. As to quaternary structure, part of the ribosomal stalk of the 50S ribosomal subunit. The N-terminus interacts with L11 and the large rRNA to form the base of the stalk. The C-terminus forms an elongated spine to which L12 dimers bind in a sequential fashion forming a multimeric L10(L12)X complex.

Functionally, forms part of the ribosomal stalk, playing a central role in the interaction of the ribosome with GTP-bound translation factors. The protein is Large ribosomal subunit protein uL10 of Rickettsia peacockii (strain Rustic).